Here is a 751-residue protein sequence, read N- to C-terminus: Centrosomal protein of 68 kDa (751 aa).

2 stretches are compositionally biased toward basic and acidic residues: residues 1-17 (MALG…EDTK) and 86-96 (ASREPVAERSE). The tract at residues 1 to 253 (MALGEEKAEA…PQPVFSGGDA (253 aa)) is disordered. 2 stretches are compositionally biased toward polar residues: residues 131-144 (LPQT…TTIC) and 163-175 (APSS…SQWK). The segment covering 176-200 (SMPSPGSAAPQPSSCSVSASSTGSS) has biased composition (low complexity). Position 326 is a phosphoserine (Ser326). Positions 339–348 (STLKSPTNVF) are enriched in polar residues. 3 disordered regions span residues 339–474 (STLK…ESDD), 511–545 (SPLE…SGDP), and 590–611 (RLDR…KGGE). Composition is skewed to basic and acidic residues over residues 399–416 (GSRD…RGAK) and 433–450 (RTRD…EKRT). Residues 451-461 (SQSARRPTCTE) show a composition bias toward polar residues. 2 positions are modified to phosphoserine: Ser466 and Ser472. Positions 520-537 (GPASLPSSSSQSQLPPGA) are enriched in low complexity.

Interacts with CNTLN; the interaction recruits CEP68 to the centrosome. Interacts with the SCF(FBXW11) complex which contains SKP1, CUL1 and FBXW11; the interaction is probably mediated by FBXW11 and the complex also contains CDK5RAP2 and PCNT. Also interacts with F-box protein BTRC. Interacts with serine/threonine-protein kinase PLK1; the interaction leads to phosphorylation of CEP68 and its subsequent degradation. Interacts with NEK2; the interaction leads to phosphorylation of CEP68. In terms of processing, phosphorylation by PLK1 is required for binding to BTRC in prometaphase. Phosphorylated directly or indirectly by NEK2. NEK2-mediated phosphorylation promotes CEP68 dissociation from the centrosome and its degradation at the onset of mitosis. Ubiquitinated and targeted for proteasomal degradation in early mitosis by the SCF(BTRC) and/or SCF(FBXW11) E3 ubiquitin-protein ligase complexes. Degradation is complete by prometaphase and is required for removal of CDK5RAP2 from the peripheral pericentriolar material and subsequent centriole separation.

It localises to the cytoplasm. Its subcellular location is the cytoskeleton. The protein resides in the microtubule organizing center. It is found in the centrosome. Its function is as follows. Involved in maintenance of centrosome cohesion, probably as part of a linker structure which prevents centrosome splitting. Required for localization of CDK5RAP2 to the centrosome during interphase. Contributes to CROCC/rootletin filament formation. This chain is Centrosomal protein of 68 kDa (CEP68), found in Pongo abelii (Sumatran orangutan).